The following is a 389-amino-acid chain: Succinate--CoA ligase [ADP-forming] subunit beta (389 aa).

The region spanning 9–236 is the ATP-grasp domain; that stretch reads KELFAKHEVP…KDATDPLELK (228 aa). ATP is bound by residues K45, 52–54, S94, and E99; that span reads GRG. Residues N191 and D205 each coordinate Mg(2+). Residues N256 and 318 to 320 contribute to the substrate site; that span reads GIT.

The protein belongs to the succinate/malate CoA ligase beta subunit family. As to quaternary structure, heterotetramer of two alpha and two beta subunits. Requires Mg(2+) as cofactor.

It catalyses the reaction succinate + ATP + CoA = succinyl-CoA + ADP + phosphate. The enzyme catalyses GTP + succinate + CoA = succinyl-CoA + GDP + phosphate. It participates in carbohydrate metabolism; tricarboxylic acid cycle; succinate from succinyl-CoA (ligase route): step 1/1. Its function is as follows. Succinyl-CoA synthetase functions in the citric acid cycle (TCA), coupling the hydrolysis of succinyl-CoA to the synthesis of either ATP or GTP and thus represents the only step of substrate-level phosphorylation in the TCA. The beta subunit provides nucleotide specificity of the enzyme and binds the substrate succinate, while the binding sites for coenzyme A and phosphate are found in the alpha subunit. The polypeptide is Succinate--CoA ligase [ADP-forming] subunit beta (Rhodococcus opacus (strain B4)).